Here is a 152-residue protein sequence, read N- to C-terminus: Small ribosomal subunit protein uS19z (152 aa).

This sequence belongs to the universal ribosomal protein uS19 family.

It localises to the cytoplasm. This Arabidopsis thaliana (Mouse-ear cress) protein is Small ribosomal subunit protein uS19z (RPS15B).